Consider the following 317-residue polypeptide: Fe-S cluster assembly protein dre2 (317 aa).

An N-terminal SAM-like domain region spans residues 22–152 (PVQAKRTLLL…KPNFEPSAAV (131 aa)). The segment at 153-209 (PLKFGLKKKNKPTPTAVPSIPTGFAAPMGIDSPVTNHDRDEDDELINEDTLLSEEDL) is linker. 4 residues coordinate [2Fe-2S] cluster: Cys-219, Cys-230, Cys-233, and Cys-235. The interval 219–235 (CQPKTGRRRRACKDCTC) is fe-S binding site A. [4Fe-4S] cluster-binding residues include Cys-280, Cys-283, Cys-291, and Cys-294. Short sequence motifs (cx2C motif) lie at residues 280–283 (CGSC) and 291–294 (CDGC). Residues 280–294 (CGSCALGDAFRCDGC) form a fe-S binding site B region.

It belongs to the anamorsin family. Monomer. Interacts with tah18. Interacts with mia40. Requires [2Fe-2S] cluster as cofactor. [4Fe-4S] cluster is required as a cofactor.

The protein localises to the cytoplasm. Its subcellular location is the mitochondrion intermembrane space. Its function is as follows. Component of the cytosolic iron-sulfur (Fe-S) protein assembly (CIA) machinery required for the maturation of extramitochondrial Fe-S proteins. Part of an electron transfer chain functioning in an early step of cytosolic Fe-S biogenesis, facilitating the de novo assembly of a [4Fe-4S] cluster on the scaffold complex cfd1-nbp35. Electrons are transferred to dre2 from NADPH via the FAD- and FMN-containing protein tah18. Tah18-dre2 are also required for the assembly of the diferric tyrosyl radical cofactor of ribonucleotide reductase (RNR), probably by providing electrons for reduction during radical cofactor maturation in the catalytic small subunit rnr2. The chain is Fe-S cluster assembly protein dre2 from Penicillium rubens (strain ATCC 28089 / DSM 1075 / NRRL 1951 / Wisconsin 54-1255) (Penicillium chrysogenum).